The sequence spans 385 residues: tRNA pseudouridine synthase D (385 aa).

Residue Asp-65 is the Nucleophile of the active site. The 203-residue stretch at Gly-143–Lys-345 folds into the TRUD domain.

Belongs to the pseudouridine synthase TruD family.

The catalysed reaction is uridine(13) in tRNA = pseudouridine(13) in tRNA. Responsible for synthesis of pseudouridine from uracil-13 in transfer RNAs. The polypeptide is tRNA pseudouridine synthase D (Aquifex aeolicus (strain VF5)).